Reading from the N-terminus, the 390-residue chain is GLH-binding kinase 1 (390 aa).

Positions 38–338 constitute a Protein kinase domain; it reads YVNLSFLNAG…VEDALNHPYV (301 aa). ATP is bound by residues 44 to 52 and lysine 67; that span reads LNAGAQGTV. Aspartate 164 (proton acceptor) is an active-site residue. A Phosphoserine modification is found at serine 198. The residue at position 200 (tyrosine 200) is a Phosphotyrosine.

Belongs to the protein kinase superfamily. CMGC Ser/Thr protein kinase family. MAP kinase subfamily. In terms of assembly, interacts with glh-1, glh-2 (via C-terminus), glh-3 (via C-terminus) and glh-4 (via C-terminus). Interacts with csn-5; the interaction may prevent glh-1 degradation induced by kgb-1. Interacts with fos-1. Requires Mg(2+) as cofactor. In terms of processing, may be phosphorylated by mek-1 on Ser-198 and/or Tyr-200. Phosphorylation is induced upon Cu(2+) and arsenite-mediated cell stimulation and by fasting. As to expression, expressed in somatic and germline tissues.

It localises to the cytoplasm. It catalyses the reaction L-seryl-[protein] + ATP = O-phospho-L-seryl-[protein] + ADP + H(+). The enzyme catalyses L-threonyl-[protein] + ATP = O-phospho-L-threonyl-[protein] + ADP + H(+). Activated by mek-1 mediated phosphorylation. No differences in basal activation between larvae and adults. Inhibited by phosphatase vhp-1. Functionally, mitogen-activated protein kinase which is an essential component of the JNK pathway composed of mlk-1, mek-1 and kgb-1. Phosphorylates the transcription factor fos-1 which prevents fos-1 dimerization and promoter binding and results in activation of target genes including F53A9.2/kreg-1 and lys-3/kreg-2. Phosphorylates jun-1 and activates the AP-1 transcription factor which is a heterodimer of jun-1 and fos-1. Phosphorylates glh-1 in vitro which may play a role in controlling glh-1 protein levels in the germline by targeting it for degradation by the proteasome. Required for oogenesis and probably also for spermatogenesis. Involved in the response to environmental stress such as heavy metals, infection and protein folding stress in an age-dependent manner. In larvae, has a protective role which becomes detrimental in adults. May control susceptibility to infection, heavy metal stress and premature lethality by regulating daf-16 cellular localization. Involved in the transcriptional response to bacterial pore-forming toxins and to fasting. Required for fasting-induced longevity. Involved in axon regeneration after injury downstream of tyrosine receptor svh-2. In Caenorhabditis elegans, this protein is GLH-binding kinase 1.